The chain runs to 253 residues: Triosephosphate isomerase (253 aa).

9–11 (NWK) lines the substrate pocket. The Electrophile role is filled by histidine 95. The Proton acceptor role is filled by glutamate 167. Substrate is bound by residues glycine 173, serine 213, and 234-235 (GG). The residue at position 213 (serine 213) is a Phosphoserine.

Belongs to the triosephosphate isomerase family. Homodimer.

It is found in the cytoplasm. It catalyses the reaction D-glyceraldehyde 3-phosphate = dihydroxyacetone phosphate. The protein operates within carbohydrate biosynthesis; gluconeogenesis. It participates in carbohydrate degradation; glycolysis; D-glyceraldehyde 3-phosphate from glycerone phosphate: step 1/1. Involved in the gluconeogenesis. Catalyzes stereospecifically the conversion of dihydroxyacetone phosphate (DHAP) to D-glyceraldehyde-3-phosphate (G3P). The polypeptide is Triosephosphate isomerase (Lysinibacillus sphaericus (strain C3-41)).